A 54-amino-acid chain; its full sequence is Glutathione S-transferase 6.7 (54 aa).

The protein belongs to the GST superfamily. Theta family. As to quaternary structure, homodimer. In terms of processing, the N-terminus is blocked.

It localises to the cytoplasm. It carries out the reaction RX + glutathione = an S-substituted glutathione + a halide anion + H(+). Conjugation of reduced glutathione to a wide number of exogenous and endogenous hydrophobic electrophiles. This chain is Glutathione S-transferase 6.7, found in Dicentrarchus labrax (European seabass).